A 541-amino-acid polypeptide reads, in one-letter code: Chaperonin GroEL (541 aa).

ATP is bound by residues 30–33 (TLGP), Lys51, 87–91 (DGTTT), Gly415, and Asp495.

The protein belongs to the chaperonin (HSP60) family. Forms a cylinder of 14 subunits composed of two heptameric rings stacked back-to-back. Interacts with the co-chaperonin GroES.

Its subcellular location is the cytoplasm. It carries out the reaction ATP + H2O + a folded polypeptide = ADP + phosphate + an unfolded polypeptide.. Together with its co-chaperonin GroES, plays an essential role in assisting protein folding. The GroEL-GroES system forms a nano-cage that allows encapsulation of the non-native substrate proteins and provides a physical environment optimized to promote and accelerate protein folding. The protein is Chaperonin GroEL of Pantoea ananas (Erwinia uredovora).